Consider the following 211-residue polypeptide: Thiamine-phosphate synthase (211 aa).

Residues 37-41 and asparagine 69 contribute to the 4-amino-2-methyl-5-(diphosphooxymethyl)pyrimidine site; that span reads QLRIK. Mg(2+) is bound by residues aspartate 70 and aspartate 89. Serine 108 serves as a coordination point for 4-amino-2-methyl-5-(diphosphooxymethyl)pyrimidine. 134–136 lines the 2-[(2R,5Z)-2-carboxy-4-methylthiazol-5(2H)-ylidene]ethyl phosphate pocket; it reads TQT. Lysine 137 lines the 4-amino-2-methyl-5-(diphosphooxymethyl)pyrimidine pocket. 2-[(2R,5Z)-2-carboxy-4-methylthiazol-5(2H)-ylidene]ethyl phosphate contacts are provided by residues glycine 166 and 186 to 187; that span reads VS.

Belongs to the thiamine-phosphate synthase family. It depends on Mg(2+) as a cofactor.

It carries out the reaction 2-[(2R,5Z)-2-carboxy-4-methylthiazol-5(2H)-ylidene]ethyl phosphate + 4-amino-2-methyl-5-(diphosphooxymethyl)pyrimidine + 2 H(+) = thiamine phosphate + CO2 + diphosphate. It catalyses the reaction 2-(2-carboxy-4-methylthiazol-5-yl)ethyl phosphate + 4-amino-2-methyl-5-(diphosphooxymethyl)pyrimidine + 2 H(+) = thiamine phosphate + CO2 + diphosphate. The catalysed reaction is 4-methyl-5-(2-phosphooxyethyl)-thiazole + 4-amino-2-methyl-5-(diphosphooxymethyl)pyrimidine + H(+) = thiamine phosphate + diphosphate. It functions in the pathway cofactor biosynthesis; thiamine diphosphate biosynthesis; thiamine phosphate from 4-amino-2-methyl-5-diphosphomethylpyrimidine and 4-methyl-5-(2-phosphoethyl)-thiazole: step 1/1. Its function is as follows. Condenses 4-methyl-5-(beta-hydroxyethyl)thiazole monophosphate (THZ-P) and 2-methyl-4-amino-5-hydroxymethyl pyrimidine pyrophosphate (HMP-PP) to form thiamine monophosphate (TMP). This Salmonella choleraesuis (strain SC-B67) protein is Thiamine-phosphate synthase.